Reading from the N-terminus, the 669-residue chain is Translation factor GUF1, mitochondrial (669 aa).

A mitochondrion-targeting transit peptide spans 1 to 49 (MWTLVGRGWGCARALAPRATGAALLVAPGPRSAPTLGAAPESWATDRLY). Residues 66–247 (ENIRNFSIVA…AIIERIPPPK (182 aa)) form the tr-type G domain. Residues 75–82 (AHVDHGKS), 140–144 (DTPGH), and 194–197 (NKID) contribute to the GTP site.

The protein belongs to the TRAFAC class translation factor GTPase superfamily. Classic translation factor GTPase family. LepA subfamily.

The protein localises to the mitochondrion inner membrane. The enzyme catalyses GTP + H2O = GDP + phosphate + H(+). Promotes mitochondrial protein synthesis. May act as a fidelity factor of the translation reaction, by catalyzing a one-codon backward translocation of tRNAs on improperly translocated ribosomes. Binds to mitochondrial ribosomes in a GTP-dependent manner. The sequence is that of Translation factor GUF1, mitochondrial from Homo sapiens (Human).